Here is an 876-residue protein sequence, read N- to C-terminus: Phosphoenolpyruvate carboxylase (876 aa).

Residues histidine 138 and lysine 543 contribute to the active site.

This sequence belongs to the PEPCase type 1 family. Requires Mg(2+) as cofactor.

The catalysed reaction is oxaloacetate + phosphate = phosphoenolpyruvate + hydrogencarbonate. Its function is as follows. Forms oxaloacetate, a four-carbon dicarboxylic acid source for the tricarboxylic acid cycle. This is Phosphoenolpyruvate carboxylase from Pseudomonas fluorescens (strain Pf0-1).